The following is a 137-amino-acid chain: Small ribosomal subunit protein uS12 (137 aa).

The interval 1-43 is disordered; that stretch reads MPTINQLVRKGRVSKTKKSDSPALNKGYNSFKKRMTDQNAPQK.

This sequence belongs to the universal ribosomal protein uS12 family. In terms of assembly, part of the 30S ribosomal subunit. Contacts proteins S8 and S17. May interact with IF1 in the 30S initiation complex.

In terms of biological role, with S4 and S5 plays an important role in translational accuracy. Functionally, interacts with and stabilizes bases of the 16S rRNA that are involved in tRNA selection in the A site and with the mRNA backbone. Located at the interface of the 30S and 50S subunits, it traverses the body of the 30S subunit contacting proteins on the other side and probably holding the rRNA structure together. The combined cluster of proteins S8, S12 and S17 appears to hold together the shoulder and platform of the 30S subunit. In Oceanobacillus iheyensis (strain DSM 14371 / CIP 107618 / JCM 11309 / KCTC 3954 / HTE831), this protein is Small ribosomal subunit protein uS12.